A 357-amino-acid chain; its full sequence is Fulicin peptides (357 aa).

The signal sequence occupies residues 1–17 (MQPTVLLILMTSCLTYQ). The propeptide occupies 18–119 (VIADKPKGNH…VDGSQGHLEP (102 aa)). Position 123 is a D-asparagine (Asn123). Residue Val126 is modified to Valine amide. Residues 130–194 (NTLPEEAGSF…YNTMNEDEAS (65 aa)) constitute a propeptide that is removed on maturation. Valine amide occurs at positions 201 and 209. Leucine amide is present on residues Leu217 and Leu226. Residues Ile233 and Ile242 each carry the isoleucine amide modification. Val250 and Val259 each carry valine amide. The propeptide occupies 263–298 (NQGVFTVSPSSTKISFDDNYLPYLSSVDAGDLSDVN). Leu305 bears the Leucine amide mark. A propeptide spanning residues 311–357 (TAEQDETSQRSNERLVALLQNTGFRKRLSRMLQNQRLVEHYPEFIGK) is cleaved from the precursor.

Found in central ganglia and the ventricles and atria of the heart.

In terms of biological role, potentiates tetanic contraction of the penis retractor muscle at very low concentrations, and also shows modulatory actions on the activity of the buccal and ventricular muscles and the central ganglionic neurons. The polypeptide is Fulicin peptides (Lissachatina fulica (Giant African land snail)).